Here is a 71-residue protein sequence, read N- to C-terminus: uncharacterized protein (71 aa).

Residues 44–66 traverse the membrane as a helical segment; that stretch reads LFFLVFRRLFSWFLVLLPSPRFF.

It localises to the membrane. This is an uncharacterized protein from Saccharomyces cerevisiae (strain ATCC 204508 / S288c) (Baker's yeast).